Here is a 90-residue protein sequence, read N- to C-terminus: Small ribosomal subunit protein bS16 (90 aa).

It belongs to the bacterial ribosomal protein bS16 family.

This chain is Small ribosomal subunit protein bS16, found in Geobacillus sp. (strain WCH70).